The primary structure comprises 232 residues: Ubiquinone biosynthesis O-methyltransferase (232 aa).

S-adenosyl-L-methionine is bound by residues Arg-36, Gly-55, Asp-76, and Leu-120.

This sequence belongs to the methyltransferase superfamily. UbiG/COQ3 family.

The catalysed reaction is a 3-demethylubiquinol + S-adenosyl-L-methionine = a ubiquinol + S-adenosyl-L-homocysteine + H(+). The enzyme catalyses a 3-(all-trans-polyprenyl)benzene-1,2-diol + S-adenosyl-L-methionine = a 2-methoxy-6-(all-trans-polyprenyl)phenol + S-adenosyl-L-homocysteine + H(+). The protein operates within cofactor biosynthesis; ubiquinone biosynthesis. O-methyltransferase that catalyzes the 2 O-methylation steps in the ubiquinone biosynthetic pathway. The sequence is that of Ubiquinone biosynthesis O-methyltransferase from Dechloromonas aromatica (strain RCB).